The primary structure comprises 491 residues: 2,3-bisphosphoglycerate-independent phosphoglycerate mutase (491 aa).

Mn(2+)-binding residues include D11 and S61. S61 functions as the Phosphoserine intermediate in the catalytic mechanism. Substrate contacts are provided by residues H118, 147 to 148 (RD), R177, R183, 248 to 251 (RSDR), and K320. Positions 386, 390, 427, 428, and 445 each coordinate Mn(2+).

This sequence belongs to the BPG-independent phosphoglycerate mutase family. Monomer. Requires Mn(2+) as cofactor.

It catalyses the reaction (2R)-2-phosphoglycerate = (2R)-3-phosphoglycerate. Its pathway is carbohydrate degradation; glycolysis; pyruvate from D-glyceraldehyde 3-phosphate: step 3/5. In terms of biological role, catalyzes the interconversion of 2-phosphoglycerate and 3-phosphoglycerate. The polypeptide is 2,3-bisphosphoglycerate-independent phosphoglycerate mutase (Sulfurimonas denitrificans (strain ATCC 33889 / DSM 1251) (Thiomicrospira denitrificans (strain ATCC 33889 / DSM 1251))).